The primary structure comprises 273 residues: N(omega)-hydroxy-L-arginine amidinohydrolase (273 aa).

Asp109, His111, Asp113, Asp198, and Asp200 together coordinate Mn(2+).

Belongs to the arginase family. Mn(2+) serves as cofactor.

The enzyme catalyses N(omega)-hydroxy-L-arginine + H2O = hydroxyurea + L-ornithine. Involved in the biosynthesis of the antibiotic D-cycloserine (DCS), a cyclic structural analog of D-alanine, used as an antitubercular agent. Catalyzes the hydrolysis of N(omega)-hydroxy-L-arginine (NHA) to yield hydroxyurea (HU) and L-ornithine. The chain is N(omega)-hydroxy-L-arginine amidinohydrolase from Streptomyces lavendulae.